Reading from the N-terminus, the 254-residue chain is MNTNTPAHPPEGAPLSEATQAALASAEHAPDSPGATHIRSFVHRRGHITQRQRDALEQLMGKWSVPYAPRPLDMAATFGRQAPTILEIGFGMGETTEKIALARPGDNFLGVEVFNAGVGSLLHRIEESAIANLRIVQHDAVEVVRDMIAPDSLAGVHVYFPDPWPKKRHHKRRLLQPPFVALLASRLAPGGYLHCATDWEDYAVQMLEVLGGEPLLRNTADGYAPRPDFRPQTKFETRGLRLGHGVWDLMFKRA.

Positions 1-34 (MNTNTPAHPPEGAPLSEATQAALASAEHAPDSPG) are disordered. The S-adenosyl-L-methionine site is built by Glu-87, Glu-112, Asp-139, and Asp-162. The active site involves Asp-162. Substrate is bound by residues Lys-166, Asp-198, and 233-236 (TKFE).

It belongs to the class I-like SAM-binding methyltransferase superfamily. TrmB family.

The catalysed reaction is guanosine(46) in tRNA + S-adenosyl-L-methionine = N(7)-methylguanosine(46) in tRNA + S-adenosyl-L-homocysteine. It functions in the pathway tRNA modification; N(7)-methylguanine-tRNA biosynthesis. In terms of biological role, catalyzes the formation of N(7)-methylguanine at position 46 (m7G46) in tRNA. This is tRNA (guanine-N(7)-)-methyltransferase from Bordetella bronchiseptica (strain ATCC BAA-588 / NCTC 13252 / RB50) (Alcaligenes bronchisepticus).